Reading from the N-terminus, the 332-residue chain is MKIFINGFGRIGRCVLRAILERNDTNPQLEVIGINDPANWEILAYLLEHDSTHGLLNKEVRYSNGKLIIGSLEIPVFNSIKDLKGVGVIIECSGKFLEPKTLENYLLLGAKKVLLSAPFMGEYDEKQYPTLVYGVNHFLYQNQAIVSNASCTTNAIAPICAILDKAFSIKEGMLTTIHSYTSDQKLIDLAHPLDKRRSRAAASNIIPTTTKAALALHKVLPNLKNKMHGHSVRVPSLDVSMIDLSLFLEKKALKDPINDLLITASKGTLKGVLEIDLKERVSSDFISNPNSVIIAPDLTFTLENMVKIMGWYDNEWGYSNRLVDMAQFMYHY.

Residues 10–11 (RI), Asp-36, Lys-81, and Ser-116 each bind NAD(+). D-glyceraldehyde 3-phosphate-binding positions include 150-152 (SCT), Thr-181, Arg-197, 210-211 (TK), and Arg-233. The active-site Nucleophile is the Cys-151. Asn-314 contributes to the NAD(+) binding site.

The protein belongs to the glyceraldehyde-3-phosphate dehydrogenase family. In terms of assembly, homotetramer.

The protein localises to the cytoplasm. The enzyme catalyses D-glyceraldehyde 3-phosphate + phosphate + NAD(+) = (2R)-3-phospho-glyceroyl phosphate + NADH + H(+). The protein operates within carbohydrate degradation; glycolysis; pyruvate from D-glyceraldehyde 3-phosphate: step 1/5. Catalyzes the oxidative phosphorylation of glyceraldehyde 3-phosphate (G3P) to 1,3-bisphosphoglycerate (BPG) using the cofactor NAD. The first reaction step involves the formation of a hemiacetal intermediate between G3P and a cysteine residue, and this hemiacetal intermediate is then oxidized to a thioester, with concomitant reduction of NAD to NADH. The reduced NADH is then exchanged with the second NAD, and the thioester is attacked by a nucleophilic inorganic phosphate to produce BPG. The chain is Glyceraldehyde-3-phosphate dehydrogenase (gapA) from Helicobacter pylori (strain J99 / ATCC 700824) (Campylobacter pylori J99).